A 415-amino-acid polypeptide reads, in one-letter code: Serine/threonine transporter SstT (415 aa).

Helical transmembrane passes span 23 to 43, 47 to 67, 85 to 105, 144 to 164, 181 to 201, 220 to 240, 293 to 313, and 333 to 353; these read ILIG…AAIA, LGTL…LMLV, ILFL…LFSF, ALLN…GFAL, AVTF…FGLV, LLVL…LLVF, IPLG…VLTL, and VVAS…LLLI.

It belongs to the dicarboxylate/amino acid:cation symporter (DAACS) (TC 2.A.23) family.

The protein resides in the cell inner membrane. It carries out the reaction L-serine(in) + Na(+)(in) = L-serine(out) + Na(+)(out). The enzyme catalyses L-threonine(in) + Na(+)(in) = L-threonine(out) + Na(+)(out). Its function is as follows. Involved in the import of serine and threonine into the cell, with the concomitant import of sodium (symport system). The protein is Serine/threonine transporter SstT of Klebsiella pneumoniae subsp. pneumoniae (strain ATCC 700721 / MGH 78578).